Here is a 686-residue protein sequence, read N- to C-terminus: Heat shock 70 kDa protein 12B (686 aa).

Positions 12–53 (LYIGSSPERSPVPSPPGSPRTQESCGIAPLTPSQSPKPEVRA) are disordered. Ser-25 and Ser-29 each carry phosphoserine. Residue Thr-42 is modified to Phosphothreonine. Phosphoserine is present on residues Ser-44, Ser-46, and Ser-276.

The protein belongs to the heat shock protein 70 family. As to expression, highest expression in muscle and heart. Lower levels in liver and kidney.

The chain is Heat shock 70 kDa protein 12B (HSPA12B) from Homo sapiens (Human).